We begin with the raw amino-acid sequence, 278 residues long: Large ribosomal subunit protein uL2 (278 aa).

Disordered regions lie at residues 1-20 (MGIR…SVSD) and 225-278 (VMNP…GKKR). Over residues 258 to 278 (RNKKKASSRLIVRRRKSGKKR) the composition is skewed to basic residues.

Belongs to the universal ribosomal protein uL2 family. Part of the 50S ribosomal subunit. Forms a bridge to the 30S subunit in the 70S ribosome.

Its function is as follows. One of the primary rRNA binding proteins. Required for association of the 30S and 50S subunits to form the 70S ribosome, for tRNA binding and peptide bond formation. It has been suggested to have peptidyltransferase activity; this is somewhat controversial. Makes several contacts with the 16S rRNA in the 70S ribosome. This is Large ribosomal subunit protein uL2 from Cutibacterium acnes (strain DSM 16379 / KPA171202) (Propionibacterium acnes).